A 696-amino-acid polypeptide reads, in one-letter code: D-(-)-3-hydroxybutyrate oligomer hydrolase (696 aa).

Residues 1 to 20 form the signal peptide; the sequence is MTRLGWGRRMVFGAALAAVA. S309 acts as the Charge relay system in catalysis.

The protein belongs to the D-(-)-3-hydroxybutyrate oligomer hydrolase family.

It localises to the secreted. The catalysed reaction is (3R)-hydroxybutanoate dimer + H2O = 2 (R)-3-hydroxybutanoate + H(+). Its pathway is lipid metabolism; butanoate metabolism. Its function is as follows. Participates in the degradation of poly-3-hydroxybutyrate (PHB). It works downstream of poly(3-hydroxybutyrate) depolymerase, hydrolyzing D(-)-3-hydroxybutyrate oligomers of various length (3HB-oligomers) into 3HB-monomers. The polypeptide is D-(-)-3-hydroxybutyrate oligomer hydrolase (Burkholderia lata (strain ATCC 17760 / DSM 23089 / LMG 22485 / NCIMB 9086 / R18194 / 383)).